A 384-amino-acid chain; its full sequence is GDP-mannose transporter (384 aa).

Residues M1–S40 lie on the Cytoplasmic side of the membrane. Residues I41–V61 traverse the membrane as a helical segment. Over M62 to G69 the chain is Lumenal. The helical transmembrane segment at L70 to I90 threads the bilayer. Residues Q91–R110 are Cytoplasmic-facing. Residues K111–S127 traverse the membrane as a helical segment. The Lumenal portion of the chain corresponds to K128–S134. Residues I135–Y151 form a helical membrane-spanning segment. Residues G152–S160 lie on the Cytoplasmic side of the membrane. A helical membrane pass occupies residues V161–A182. Residues D183 to T200 lie on the Lumenal side of the membrane. A helical membrane pass occupies residues L201–G221. Over M222 to T236 the chain is Cytoplasmic. A helical membrane pass occupies residues L237–M257. The Lumenal portion of the chain corresponds to E258–N276. Residue N264 is glycosylated (N-linked (GlcNAc...) asparagine). The chain crosses the membrane as a helical span at residues I277 to W297. Residues C298–T305 are Cytoplasmic-facing. A helical membrane pass occupies residues T306–F326. The Lumenal segment spans residues D327 to P329. A helical membrane pass occupies residues V330 to V350. The Cytoplasmic segment spans residues A351–S384. The interval L364–S384 is disordered. Residues P369 to S384 show a composition bias toward polar residues.

It belongs to the TPT transporter family. SLC35D subfamily. Homooligomer.

The protein resides in the golgi apparatus membrane. The protein localises to the cytoplasmic vesicle membrane. It is found in the endoplasmic reticulum membrane. Functionally, involved in the import of GDP-mannose from the cytoplasm into the Golgi lumen. The sequence is that of GDP-mannose transporter (gmt1) from Aspergillus terreus (strain NIH 2624 / FGSC A1156).